Reading from the N-terminus, the 162-residue chain is MRHNKKFNHLGRTASHRSAMLSNMACSLIKHKRITTTVAKAKALKKFVEPLITKSKDDTTNSRRVVFSNLQDKFAVTELFKEISVKVADRPGGYTRIIKTGHRLGDNAEMCFIELVDYDENMAKTATAKKATRTRRSKKSAAATEAPAAPAAETTEEAPKAE.

Positions 126–162 are disordered; the sequence is ATAKKATRTRRSKKSAAATEAPAAPAAETTEEAPKAE. Basic residues predominate over residues 130-139; that stretch reads KATRTRRSKK. A compositionally biased stretch (low complexity) spans 140-153; the sequence is SAAATEAPAAPAAE.

Belongs to the bacterial ribosomal protein bL17 family. In terms of assembly, part of the 50S ribosomal subunit. Contacts protein L32.

The sequence is that of Large ribosomal subunit protein bL17 from Phocaeicola vulgatus (strain ATCC 8482 / DSM 1447 / JCM 5826 / CCUG 4940 / NBRC 14291 / NCTC 11154) (Bacteroides vulgatus).